We begin with the raw amino-acid sequence, 354 residues long: Phosphoribosylformylglycinamidine cyclo-ligase (354 aa).

It belongs to the AIR synthase family.

The protein resides in the cytoplasm. The enzyme catalyses 2-formamido-N(1)-(5-O-phospho-beta-D-ribosyl)acetamidine + ATP = 5-amino-1-(5-phospho-beta-D-ribosyl)imidazole + ADP + phosphate + H(+). Its pathway is purine metabolism; IMP biosynthesis via de novo pathway; 5-amino-1-(5-phospho-D-ribosyl)imidazole from N(2)-formyl-N(1)-(5-phospho-D-ribosyl)glycinamide: step 2/2. This is Phosphoribosylformylglycinamidine cyclo-ligase from Marinobacter nauticus (strain ATCC 700491 / DSM 11845 / VT8) (Marinobacter aquaeolei).